A 389-amino-acid chain; its full sequence is MKKISVLGSTGSIGKKTVDLLLKRKEEYQVEALSTCSNFALLACQAKLLNARYVAISNKRFYKDLKESLLGTGIKVEVGTEGLMNVASLPVDLSVVAVVGIAGLEPVMHVIESGTKVIALANKESIVCGGKLLLKKTEEKNVQIVPIDSEHNAIFQVLQNGNKCVEKIILTASGGSFLNYSLEQLRNVTVGQALSHPTWNMGKKISVDSATMMNKALEIIEAHNLFNISPNRIEAIVHPESIIHGIVIYKDGFNFAVLAEADMAIPISYALSWPERSALSYKLDLTKQKLTFQEPDHKRFPALKLSMEVLNSSSPHTNSIVLNAANEVAVDKFLKSRIDFLEIIKVVKLTVENFDSYTDINSLSDIINIDLESRAIAKEIIKNKVLAYS.

NADPH-binding residues include Thr-10, Gly-11, Ser-12, Ile-13, Asn-38, and Asn-122. Lys-123 provides a ligand contact to 1-deoxy-D-xylulose 5-phosphate. Residue Glu-124 coordinates NADPH. Asp-148 provides a ligand contact to Mn(2+). 1-deoxy-D-xylulose 5-phosphate is bound by residues Ser-149, Glu-150, Ser-173, and His-196. Glu-150 provides a ligand contact to Mn(2+). Residue Gly-202 coordinates NADPH. 1-deoxy-D-xylulose 5-phosphate contacts are provided by Ser-209, Asn-214, Lys-215, and Glu-218. Glu-218 lines the Mn(2+) pocket.

It belongs to the DXR family. Requires Mg(2+) as cofactor. Mn(2+) serves as cofactor.

It carries out the reaction 2-C-methyl-D-erythritol 4-phosphate + NADP(+) = 1-deoxy-D-xylulose 5-phosphate + NADPH + H(+). It participates in isoprenoid biosynthesis; isopentenyl diphosphate biosynthesis via DXP pathway; isopentenyl diphosphate from 1-deoxy-D-xylulose 5-phosphate: step 1/6. Its function is as follows. Catalyzes the NADPH-dependent rearrangement and reduction of 1-deoxy-D-xylulose-5-phosphate (DXP) to 2-C-methyl-D-erythritol 4-phosphate (MEP). The sequence is that of 1-deoxy-D-xylulose 5-phosphate reductoisomerase from Wolbachia sp. subsp. Brugia malayi (strain TRS).